The chain runs to 100 residues: Small ribosomal subunit protein uS14 (100 aa).

Belongs to the universal ribosomal protein uS14 family. In terms of assembly, part of the 30S ribosomal subunit. Contacts proteins S3 and S10.

Its function is as follows. Binds 16S rRNA, required for the assembly of 30S particles and may also be responsible for determining the conformation of the 16S rRNA at the A site. The sequence is that of Small ribosomal subunit protein uS14 from Prochlorococcus marinus subsp. pastoris (strain CCMP1986 / NIES-2087 / MED4).